The following is a 393-amino-acid chain: NAD(P)H-quinone oxidoreductase subunit H, chloroplastic (393 aa).

The protein belongs to the complex I 49 kDa subunit family. As to quaternary structure, NDH is composed of at least 16 different subunits, 5 of which are encoded in the nucleus.

It is found in the plastid. Its subcellular location is the chloroplast thylakoid membrane. The catalysed reaction is a plastoquinone + NADH + (n+1) H(+)(in) = a plastoquinol + NAD(+) + n H(+)(out). The enzyme catalyses a plastoquinone + NADPH + (n+1) H(+)(in) = a plastoquinol + NADP(+) + n H(+)(out). In terms of biological role, NDH shuttles electrons from NAD(P)H:plastoquinone, via FMN and iron-sulfur (Fe-S) centers, to quinones in the photosynthetic chain and possibly in a chloroplast respiratory chain. The immediate electron acceptor for the enzyme in this species is believed to be plastoquinone. Couples the redox reaction to proton translocation, and thus conserves the redox energy in a proton gradient. In Oryza nivara (Indian wild rice), this protein is NAD(P)H-quinone oxidoreductase subunit H, chloroplastic.